We begin with the raw amino-acid sequence, 700 residues long: Beta-galactosidase Bga (700 aa).

Arg-103 is a binding site for substrate. Cys-107 is a binding site for Zn(2+). Asn-141 lines the substrate pocket. Glu-142 serves as the catalytic Proton donor. Residues Cys-151, Cys-153, and Cys-156 each contribute to the Zn(2+) site. Catalysis depends on Glu-312, which acts as the Nucleophile. Substrate-binding positions include Trp-320 and 360-363; that span reads EQYH. The segment covering 648–658 has biased composition (acidic residues); sequence DPESLAVDDTD. A disordered region spans residues 648-674; the sequence is DPESLAVDDTDRDGFDPMADDDKDSSA.

Belongs to the glycosyl hydrolase 42 family.

The enzyme catalyses Hydrolysis of terminal non-reducing beta-D-galactose residues in beta-D-galactosides.. Requires 4 M NaCl or KCl for maximal activity. Functionally, cleaves o-nitrophenyl-beta-D-galactopyranoside (ONPG) in vitro. This Halorubrum lacusprofundi (strain ATCC 49239 / DSM 5036 / JCM 8891 / ACAM 34) protein is Beta-galactosidase Bga.